Consider the following 639-residue polypeptide: Elongation factor 4 (639 aa).

The region spanning 39–221 (TMIRNFCIIA…EIVRRVPAPV (183 aa)) is the tr-type G domain. Residues 51–56 (DHGKST) and 168–171 (NKID) contribute to the GTP site.

Belongs to the TRAFAC class translation factor GTPase superfamily. Classic translation factor GTPase family. LepA subfamily.

It localises to the cell membrane. The catalysed reaction is GTP + H2O = GDP + phosphate + H(+). Its function is as follows. Required for accurate and efficient protein synthesis under certain stress conditions. May act as a fidelity factor of the translation reaction, by catalyzing a one-codon backward translocation of tRNAs on improperly translocated ribosomes. Back-translocation proceeds from a post-translocation (POST) complex to a pre-translocation (PRE) complex, thus giving elongation factor G a second chance to translocate the tRNAs correctly. Binds to ribosomes in a GTP-dependent manner. This chain is Elongation factor 4, found in Frankia casuarinae (strain DSM 45818 / CECT 9043 / HFP020203 / CcI3).